The chain runs to 259 residues: MGKWTIKEASELLQEIGTEEDERFQILLKDERKGIQNLISKWRKQKKKMQEEKEQFLEMSKYENALRKQGISYIAGIDEVGRGPLAGPVVTAAVILPEEFYIPGLNDSKKLSEAKRELFYDEIREKAIAIGVGIVSPQVIDEMNIYQATKRAMLDAVANLSYAPEHLLIDAMKLPTSIPQTSIVKGDAKSISISAASIIAKVTRDRMMKELGKTYPEYGFEKHMGYGTKQHLEAIETYGVLEEHRKTFAPIKDMIKNKL.

Residues serine 72 to leucine 259 form the RNase H type-2 domain. Residues aspartate 78, glutamate 79, and aspartate 170 each contribute to the a divalent metal cation site.

It belongs to the RNase HII family. Requires Mn(2+) as cofactor. The cofactor is Mg(2+).

Its subcellular location is the cytoplasm. It carries out the reaction Endonucleolytic cleavage to 5'-phosphomonoester.. In terms of biological role, endonuclease that specifically degrades the RNA of RNA-DNA hybrids. The protein is Ribonuclease HII of Bacillus cytotoxicus (strain DSM 22905 / CIP 110041 / 391-98 / NVH 391-98).